The following is a 473-amino-acid chain: Tryptophanase (473 aa).

Lys-270 is subject to N6-(pyridoxal phosphate)lysine.

It belongs to the beta-eliminating lyase family. In terms of assembly, homotetramer. Pyridoxal 5'-phosphate is required as a cofactor.

It catalyses the reaction L-tryptophan + H2O = indole + pyruvate + NH4(+). The protein operates within amino-acid degradation; L-tryptophan degradation via pyruvate pathway; indole and pyruvate from L-tryptophan: step 1/1. In Vibrio vulnificus (strain CMCP6), this protein is Tryptophanase.